Consider the following 329-residue polypeptide: uncharacterized protein (329 aa).

A coiled-coil region spans residues 56-247 (LNKEEQFQED…EAEKTHQAKL (192 aa)).

This is an uncharacterized protein from Bos taurus (Bovine).